The chain runs to 402 residues: C2H2 finger domain transcription factor CON7 (402 aa).

The segment at 1–247 (MLASSRQPRH…GAQQHKRPRR (247 aa)) is disordered. Composition is skewed to polar residues over residues 19–49 (LSSS…TSVG) and 72–86 (CGDN…TVDT). Positions 87–98 (SSAAQYNASAQQ) are enriched in low complexity. Composition is skewed to polar residues over residues 99–116 (EVRS…TPTS) and 125–151 (ARSS…SSGD). The C2H2-type zinc-finger motif lies at 256–282 (YKCGWQGCEKAYGTLNHLNAHVTMQSH). A coiled-coil region spans residues 289–323 (EEFKEIRKEWKARKKEEEAARKADEERQRQAAQSQ). Positions 302–317 (KKEEEAARKADEERQR) are enriched in basic and acidic residues. The segment at 302-402 (KKEEEAARKA…GSNQAMYNQR (101 aa)) is disordered. Polar residues-rich tracts occupy residues 322–341 (SQGG…SSNG), 363–373 (AATSTSVQQQP), and 392–402 (GGSNQAMYNQR).

It localises to the nucleus. In terms of biological role, transcription factor that plays a central role in appressorium formation and pathogenicity. Required for the expression of a large set of genes including factors that might play a role in membrane metabolism and ergosterol biosynthesis, the chitin-binding protein CBP1,as well as CHS7 that is essential for normal pathogenic development. The sequence is that of C2H2 finger domain transcription factor CON7 from Pyricularia oryzae (strain 70-15 / ATCC MYA-4617 / FGSC 8958) (Rice blast fungus).